Reading from the N-terminus, the 168-residue chain is HTH-type transcriptional regulator IscR (168 aa).

Residues 2–131 (KLTSKGRYAV…DGISLGELMV (130 aa)) enclose the HTH rrf2-type domain. A DNA-binding region (H-T-H motif) is located at residues 28–51 (LADISERQGISLSYLEQLFSKLRK). 3 residues coordinate [2Fe-2S] cluster: Cys-92, Cys-98, and Cys-104.

[2Fe-2S] cluster serves as cofactor.

Regulates the transcription of several operons and genes involved in the biogenesis of Fe-S clusters and Fe-S-containing proteins. The polypeptide is HTH-type transcriptional regulator IscR (Aliivibrio salmonicida (strain LFI1238) (Vibrio salmonicida (strain LFI1238))).